Consider the following 352-residue polypeptide: DNA polymerase IV (352 aa).

In terms of domain architecture, UmuC spans 3 to 187; it reads VLFVDFDYFY…LDIADVPGIG (185 aa). Residues Asp-7 and Asp-105 each coordinate Mg(2+). Residue Glu-106 is part of the active site.

It belongs to the DNA polymerase type-Y family. In terms of assembly, monomer. Interacts with the PCNA heterotrimer via PCNA1. The cofactor is Mg(2+).

The protein localises to the cytoplasm. It catalyses the reaction DNA(n) + a 2'-deoxyribonucleoside 5'-triphosphate = DNA(n+1) + diphosphate. In terms of biological role, poorly processive, error-prone DNA polymerase involved in untargeted mutagenesis. Copies undamaged DNA at stalled replication forks, which arise in vivo from mismatched or misaligned primer ends. These misaligned primers can be extended by PolIV. Exhibits no 3'-5' exonuclease (proofreading) activity. It is involved in translesional synthesis. The polypeptide is DNA polymerase IV (dbh) (Saccharolobus solfataricus (strain ATCC 35092 / DSM 1617 / JCM 11322 / P2) (Sulfolobus solfataricus)).